Here is a 93-residue protein sequence, read N- to C-terminus: Signal recognition particle 19 kDa protein (93 aa).

It belongs to the SRP19 family. As to quaternary structure, part of the signal recognition particle protein translocation system, which is composed of SRP and FtsY. Archaeal SRP consists of a 7S RNA molecule of 300 nucleotides and two protein subunits: SRP54 and SRP19.

The protein localises to the cytoplasm. Involved in targeting and insertion of nascent membrane proteins into the cytoplasmic membrane. Binds directly to 7S RNA and mediates binding of the 54 kDa subunit of the SRP. The protein is Signal recognition particle 19 kDa protein of Haloquadratum walsbyi (strain DSM 16790 / HBSQ001).